Here is a 572-residue protein sequence, read N- to C-terminus: Phospholipase B-like protein B (572 aa).

A signal peptide spans 1 to 28; it reads MNKLKSNFILNIVILFTILIFNINFINC. Asn-73, Asn-138, Asn-219, Asn-427, Asn-544, and Asn-564 each carry an N-linked (GlcNAc...) asparagine glycan.

It belongs to the phospholipase B-like family.

The protein localises to the secreted. Functionally, probable phospholipase. In Dictyostelium discoideum (Social amoeba), this protein is Phospholipase B-like protein B (plbB).